The following is a 561-amino-acid chain: DNA ligase B (561 aa).

The active-site N6-AMP-lysine intermediate is Lys-124.

Belongs to the NAD-dependent DNA ligase family. LigB subfamily.

The catalysed reaction is NAD(+) + (deoxyribonucleotide)n-3'-hydroxyl + 5'-phospho-(deoxyribonucleotide)m = (deoxyribonucleotide)n+m + AMP + beta-nicotinamide D-nucleotide.. Its function is as follows. Catalyzes the formation of phosphodiester linkages between 5'-phosphoryl and 3'-hydroxyl groups in double-stranded DNA using NAD as a coenzyme and as the energy source for the reaction. The polypeptide is DNA ligase B (Cronobacter sakazakii (strain ATCC BAA-894) (Enterobacter sakazakii)).